A 387-amino-acid polypeptide reads, in one-letter code: Formate-dependent phosphoribosylglycinamide formyltransferase (387 aa).

N(1)-(5-phospho-beta-D-ribosyl)glycinamide is bound by residues 12-13 (EL) and Glu-72. ATP contacts are provided by residues Arg-104, Lys-145, 150 to 155 (SSGKGQ), 185 to 188 (EEFI), and Glu-193. In terms of domain architecture, ATP-grasp spans 109–300 (DLAAKDLKLL…EFELHLRAIL (192 aa)). Residues Glu-258 and Glu-270 each coordinate Mg(2+). N(1)-(5-phospho-beta-D-ribosyl)glycinamide is bound by residues Asp-277, Lys-348, and 355 to 356 (RR).

The protein belongs to the PurK/PurT family. Homodimer.

It catalyses the reaction N(1)-(5-phospho-beta-D-ribosyl)glycinamide + formate + ATP = N(2)-formyl-N(1)-(5-phospho-beta-D-ribosyl)glycinamide + ADP + phosphate + H(+). It participates in purine metabolism; IMP biosynthesis via de novo pathway; N(2)-formyl-N(1)-(5-phospho-D-ribosyl)glycinamide from N(1)-(5-phospho-D-ribosyl)glycinamide (formate route): step 1/1. Its function is as follows. Involved in the de novo purine biosynthesis. Catalyzes the transfer of formate to 5-phospho-ribosyl-glycinamide (GAR), producing 5-phospho-ribosyl-N-formylglycinamide (FGAR). Formate is provided by PurU via hydrolysis of 10-formyl-tetrahydrofolate. This chain is Formate-dependent phosphoribosylglycinamide formyltransferase, found in Leptospira interrogans serogroup Icterohaemorrhagiae serovar copenhageni (strain Fiocruz L1-130).